We begin with the raw amino-acid sequence, 311 residues long: Ribonuclease HIII (311 aa).

The region spanning 95–311 (MSIVGSDEVG…NTEKAFRLLK (217 aa)) is the RNase H type-2 domain. Positions 101, 102, and 206 each coordinate a divalent metal cation.

This sequence belongs to the RNase HII family. RnhC subfamily. Requires Mn(2+) as cofactor. The cofactor is Mg(2+).

It is found in the cytoplasm. It catalyses the reaction Endonucleolytic cleavage to 5'-phosphomonoester.. Endonuclease that specifically degrades the RNA of RNA-DNA hybrids. The protein is Ribonuclease HIII of Bacillus thuringiensis subsp. konkukian (strain 97-27).